Consider the following 460-residue polypeptide: Ribosomal protein uS12 methylthiotransferase RimO (460 aa).

One can recognise an MTTase N-terminal domain in the interval 18–134 (MKIHITSLGC…VTSIVAEVLR (117 aa)). Residues cysteine 27, cysteine 63, cysteine 97, cysteine 171, cysteine 175, and cysteine 178 each contribute to the [4Fe-4S] cluster site. Residues 157-387 (STPFHYAYVK…MVLQQEISLS (231 aa)) form the Radical SAM core domain. One can recognise a TRAM domain in the interval 390–456 (QEWIGKTLEV…HYDLMGEAID (67 aa)).

Belongs to the methylthiotransferase family. RimO subfamily. It depends on [4Fe-4S] cluster as a cofactor.

It localises to the cytoplasm. The enzyme catalyses L-aspartate(89)-[ribosomal protein uS12]-hydrogen + (sulfur carrier)-SH + AH2 + 2 S-adenosyl-L-methionine = 3-methylsulfanyl-L-aspartate(89)-[ribosomal protein uS12]-hydrogen + (sulfur carrier)-H + 5'-deoxyadenosine + L-methionine + A + S-adenosyl-L-homocysteine + 2 H(+). Its function is as follows. Catalyzes the methylthiolation of an aspartic acid residue of ribosomal protein uS12. This Heliobacterium modesticaldum (strain ATCC 51547 / Ice1) protein is Ribosomal protein uS12 methylthiotransferase RimO.